The primary structure comprises 157 residues: Probable calcium-binding protein CML23 (157 aa).

EF-hand domains are found at residues 11 to 46 (GSME…LSPN), 47 to 82 (ASQE…SDQS), 86 to 121 (SAIR…LGEK), and 122 to 157 (CSIQ…NGSA). Positions 24, 26, 28, 30, 35, 60, 62, 64, 71, 99, 101, 103, 105, 110, 135, 137, 139, 141, and 146 each coordinate Ca(2+).

Its function is as follows. Potential calcium sensor. This is Probable calcium-binding protein CML23 (CML23) from Arabidopsis thaliana (Mouse-ear cress).